Consider the following 943-residue polypeptide: Isoleucine--tRNA ligase (943 aa).

The 'HIGH' region motif lies at 59–69; the sequence is PYANGQIHLGH. Glu577 is a binding site for L-isoleucyl-5'-AMP. Positions 618-622 match the 'KMSKS' region motif; it reads KMSKS. Lys621 contributes to the ATP binding site. Zn(2+) is bound by residues Cys906, Cys909, Cys926, and Cys929.

It belongs to the class-I aminoacyl-tRNA synthetase family. IleS type 1 subfamily. Monomer. Zn(2+) is required as a cofactor.

It localises to the cytoplasm. It carries out the reaction tRNA(Ile) + L-isoleucine + ATP = L-isoleucyl-tRNA(Ile) + AMP + diphosphate. In terms of biological role, catalyzes the attachment of isoleucine to tRNA(Ile). As IleRS can inadvertently accommodate and process structurally similar amino acids such as valine, to avoid such errors it has two additional distinct tRNA(Ile)-dependent editing activities. One activity is designated as 'pretransfer' editing and involves the hydrolysis of activated Val-AMP. The other activity is designated 'posttransfer' editing and involves deacylation of mischarged Val-tRNA(Ile). The polypeptide is Isoleucine--tRNA ligase (Xanthomonas campestris pv. campestris (strain 8004)).